Here is a 309-residue protein sequence, read N- to C-terminus: Taste receptor type 2 member 8 (309 aa).

The Extracellular segment spans residues 1–7; it reads MFSPADN. Residues 8-28 form a helical membrane-spanning segment; the sequence is IFIILITGEFILGILGNGYIA. The Cytoplasmic segment spans residues 29 to 50; it reads LVNWIDWIKKKKISTVDYILTN. A helical transmembrane segment spans residues 51–71; sequence LVIARICLISVMVVNGIVIVL. The Extracellular portion of the chain corresponds to 72–82; it reads NPDVYTKNKQQ. The chain crosses the membrane as a helical span at residues 83-103; that stretch reads IVIFTFWTFANYLNMWITTCL. The Cytoplasmic portion of the chain corresponds to 104–131; that stretch reads NVFYFLKIASSSHPLFLWLKWKIDMVVH. A helical transmembrane segment spans residues 132–152; the sequence is WILLGCFAISLLVSLIAAIVL. The Extracellular segment spans residues 153–184; the sequence is SCDYRFHAIAKHKRNITEMFXVSKIPYFEPLT. N-linked (GlcNAc...) asparagine glycosylation is present at asparagine 167. Residues 185–205 form a helical membrane-spanning segment; the sequence is LFNLFAIVPFIVSLISFFLLV. At 206-239 the chain is on the cytoplasmic side; it reads RSLWRHTKQIKLYATGSRDPSTEVHVRAIKTMTS. The helical transmembrane segment at 240-260 threads the bilayer; sequence FIFFFFLYFISSILMTFSYLM. The Extracellular segment spans residues 261–266; it reads TKYKLA. Residues 267 to 287 form a helical membrane-spanning segment; that stretch reads VEFGEIAAILYPLGHSLILIV. At 288 to 309 the chain is on the cytoplasmic side; it reads LNNKLRQIFVRMLTCRKIACVI.

It belongs to the G-protein coupled receptor T2R family.

The protein resides in the membrane. Receptor that may play a role in the perception of bitterness and is gustducin-linked. May play a role in sensing the chemical composition of the gastrointestinal content. The activity of this receptor may stimulate alpha gustducin, mediate PLC-beta-2 activation and lead to the gating of TRPM5. This is Taste receptor type 2 member 8 (TAS2R8) from Pan troglodytes (Chimpanzee).